Consider the following 283-residue polypeptide: Thymidylate synthase (283 aa).

R22 provides a ligand contact to dUMP. The Nucleophile role is filled by C160. DUMP is bound by residues 180–183 (RSCD), N191, and 221–223 (HIY). D183 serves as a coordination point for (6R)-5,10-methylene-5,6,7,8-tetrahydrofolate. S282 is a (6R)-5,10-methylene-5,6,7,8-tetrahydrofolate binding site.

Belongs to the thymidylate synthase family. Bacterial-type ThyA subfamily. As to quaternary structure, homodimer.

The protein resides in the cytoplasm. The catalysed reaction is dUMP + (6R)-5,10-methylene-5,6,7,8-tetrahydrofolate = 7,8-dihydrofolate + dTMP. It functions in the pathway pyrimidine metabolism; dTTP biosynthesis. In terms of biological role, catalyzes the reductive methylation of 2'-deoxyuridine-5'-monophosphate (dUMP) to 2'-deoxythymidine-5'-monophosphate (dTMP) while utilizing 5,10-methylenetetrahydrofolate (mTHF) as the methyl donor and reductant in the reaction, yielding dihydrofolate (DHF) as a by-product. This enzymatic reaction provides an intracellular de novo source of dTMP, an essential precursor for DNA biosynthesis. This chain is Thymidylate synthase, found in Tolumonas auensis (strain DSM 9187 / NBRC 110442 / TA 4).